Consider the following 188-residue polypeptide: Protein GrpE (188 aa).

A compositionally biased stretch (polar residues) spans 1 to 10; sequence MPDPTQNPNV. The tract at residues 1 to 35 is disordered; that stretch reads MPDPTQNPNVTPELEQHAAPEAAAEAAPESSADVM. Positions 19 to 32 are enriched in low complexity; that stretch reads APEAAAEAAPESSA.

It belongs to the GrpE family. In terms of assembly, homodimer.

The protein localises to the cytoplasm. Participates actively in the response to hyperosmotic and heat shock by preventing the aggregation of stress-denatured proteins, in association with DnaK and GrpE. It is the nucleotide exchange factor for DnaK and may function as a thermosensor. Unfolded proteins bind initially to DnaJ; upon interaction with the DnaJ-bound protein, DnaK hydrolyzes its bound ATP, resulting in the formation of a stable complex. GrpE releases ADP from DnaK; ATP binding to DnaK triggers the release of the substrate protein, thus completing the reaction cycle. Several rounds of ATP-dependent interactions between DnaJ, DnaK and GrpE are required for fully efficient folding. This chain is Protein GrpE, found in Azoarcus sp. (strain BH72).